Consider the following 283-residue polypeptide: MTDTLSDYVDCTPLLDDREALDRFYDEHGYVYLRGALDRELVRTAAEQMLEGLIALGHADPATTLDTLTIDSFEAVDEVAMHDYVKYDDLWNHPSTLKVWEKVLGEPVFVFKSTTIRYYPSAAGSAEPSFLTPLHQDGFYIGPNKDFRTAWIPLLPTSHGIGGVAVADGSHKKGPREHVVTEQFRRFGHAVRGIPAEEFGTDEQLLFSPMEPGDVLIFHAFMCHKSIPNVSANPAGMRMSMDTRIQPASSHRGFNALTPWPESAKDASKGILSKITGTPTTAE.

Position 117 (R117) interacts with substrate. Residues H135 and D137 each coordinate Fe cation. Residues 135 to 137 and W151 each bind 2-oxoglutarate; that span reads HQD. R186 lines the substrate pocket. A Fe cation-binding site is contributed by H224. 2-oxoglutarate is bound by residues S226 and R238. The tract at residues 260-283 is disordered; sequence WPESAKDASKGILSKITGTPTTAE.

It belongs to the PhyH family. The cofactor is Fe cation. L-ascorbate is required as a cofactor.

The catalysed reaction is 1-deoxypentalenate + 2-oxoglutarate + O2 = 1-deoxy-11beta-hydroxypentalenate + succinate + CO2. It functions in the pathway antibiotic biosynthesis; pentalenolactone biosynthesis. In terms of biological role, catalyzes the conversion of 1-deoxypentalenic acid to 11-beta-hydroxy-1-deoxypentalenic acid in the biosynthesis of pentalenolactone antibiotic. This chain is 1-deoxypentalenic acid 11-beta-hydroxylase (penH), found in Streptomyces exfoliatus (Streptomyces hydrogenans).